A 225-amino-acid chain; its full sequence is Orotate phosphoribosyltransferase (225 aa).

5-phospho-alpha-D-ribose 1-diphosphate is bound at residue Lys31. An orotate-binding site is contributed by 39–40 (FF). 5-phospho-alpha-D-ribose 1-diphosphate is bound by residues 78–79 (YK), Arg105, Lys106, Lys109, His111, and 130–138 (DDVLTSGKA). 2 residues coordinate orotate: Thr134 and Arg163.

Belongs to the purine/pyrimidine phosphoribosyltransferase family. PyrE subfamily. In terms of assembly, homodimer.

The catalysed reaction is orotidine 5'-phosphate + diphosphate = orotate + 5-phospho-alpha-D-ribose 1-diphosphate. The protein operates within pyrimidine metabolism; UMP biosynthesis via de novo pathway; UMP from orotate: step 1/2. Functionally, catalyzes the transfer of a ribosyl phosphate group from 5-phosphoribose 1-diphosphate to orotate, leading to the formation of orotidine monophosphate (OMP). The protein is Orotate phosphoribosyltransferase (URA5) of Cryptococcus neoformans var. neoformans serotype D (strain B-3501A) (Filobasidiella neoformans).